A 336-amino-acid polypeptide reads, in one-letter code: Abasic site processing protein HMCES (336 aa).

Catalysis depends on cysteine 2, which acts as the Nucleophile. A Thiazolidine linkage to a ring-opened DNA abasic site modification is found at cysteine 2. The segment at 26-51 (RQKCPKWRDGDTDKYQPSYNKSPQSN) is disordered. Positions 40-51 (YQPSYNKSPQSN) are enriched in polar residues. Glutamate 129 is an active-site residue. Positions 285 to 336 (QNKSPKKEESRSIIQSPKLSQFGAPPKKTSAGLMQQWLKKEDGEPSPKRAKK) are disordered. The segment covering 322 to 336 (LKKEDGEPSPKRAKK) has biased composition (basic and acidic residues).

This sequence belongs to the SOS response-associated peptidase family. Ubiquitination of the hmces DNA-protein cross-link by rfwd3 may promotes its degradation.

The protein resides in the chromosome. With respect to regulation, formation and reversal of DNA-protein cross-link depends on DNA context. Catalyzes formation of the thiazolidine linkage in presence of abasic sites in single-stranded DNA. Mediates the reversal of the thiazolidine cross-link in presence of double stranded DNA. Functionally, sensor of abasic sites in single-stranded DNA (ssDNA) required to preserve genome integrity by promoting error-free repair of abasic sites. Acts as an enzyme that recognizes and binds abasic sites in ssDNA at replication forks and chemically modifies the lesion by forming a covalent cross-link with DNA: forms a stable thiazolidine linkage between a ring-opened abasic site and the alpha-amino and sulfhydryl substituents of its N-terminal catalytic cysteine residue. The hmces DNA-protein cross-link is then either reversed or degraded. Hmces is able to catalyze the reversal of its thiazolidine cross-link and cycle between a cross-link and a non-cross-linked state depending on DNA context: mediates self-reversal of the thiazolidine cross-link in double stranded DNA, allowing apex1 to initiate downstream repair of abasic sites. The hmces DNA-protein cross-link can also be degraded by the sprtn metalloprotease following unfolding by the brip1/fancj helicase. Promotes error-free repair of abasic sites by protecting abasic sites from translesion synthesis (TLS) polymerases and endonucleases that are error-prone and would generate mutations and double-strand breaks. Acts as a protease: mediates autocatalytic processing of its N-terminal methionine in order to expose the catalytic cysteine. The HMCES DNA-protein cross-link is then either reversed or degraded. According to a model, the HMCES DNA-protein cross-link. The protein is Abasic site processing protein HMCES of Xenopus laevis (African clawed frog).